A 212-amino-acid polypeptide reads, in one-letter code: 3,4-dihydroxy-2-butanone 4-phosphate synthase (212 aa).

D-ribulose 5-phosphate is bound by residues 37 to 38, D42, 150 to 154, and E174; these read RE and RRGHT. E38 provides a ligand contact to Mg(2+). Residue H153 participates in Mg(2+) binding.

It belongs to the DHBP synthase family. In terms of assembly, homodimer. It depends on Mg(2+) as a cofactor. Mn(2+) serves as cofactor.

The catalysed reaction is D-ribulose 5-phosphate = (2S)-2-hydroxy-3-oxobutyl phosphate + formate + H(+). It functions in the pathway cofactor biosynthesis; riboflavin biosynthesis; 2-hydroxy-3-oxobutyl phosphate from D-ribulose 5-phosphate: step 1/1. In terms of biological role, catalyzes the conversion of D-ribulose 5-phosphate to formate and 3,4-dihydroxy-2-butanone 4-phosphate. The chain is 3,4-dihydroxy-2-butanone 4-phosphate synthase from Shewanella pealeana (strain ATCC 700345 / ANG-SQ1).